The chain runs to 142 residues: Large ribosomal subunit protein uL11 (142 aa).

Belongs to the universal ribosomal protein uL11 family. As to quaternary structure, part of the ribosomal stalk of the 50S ribosomal subunit. Interacts with L10 and the large rRNA to form the base of the stalk. L10 forms an elongated spine to which L12 dimers bind in a sequential fashion forming a multimeric L10(L12)X complex. Post-translationally, one or more lysine residues are methylated.

In terms of biological role, forms part of the ribosomal stalk which helps the ribosome interact with GTP-bound translation factors. The chain is Large ribosomal subunit protein uL11 from Mycolicibacterium vanbaalenii (strain DSM 7251 / JCM 13017 / BCRC 16820 / KCTC 9966 / NRRL B-24157 / PYR-1) (Mycobacterium vanbaalenii).